Consider the following 427-residue polypeptide: Serine hydroxymethyltransferase (427 aa).

(6S)-5,6,7,8-tetrahydrofolate is bound by residues Leu122 and Gly126–Leu128. Lys231 carries the N6-(pyridoxal phosphate)lysine modification. (6S)-5,6,7,8-tetrahydrofolate is bound at residue Ser355–Phe357.

The protein belongs to the SHMT family. As to quaternary structure, homodimer. Pyridoxal 5'-phosphate is required as a cofactor.

It is found in the cytoplasm. It carries out the reaction (6R)-5,10-methylene-5,6,7,8-tetrahydrofolate + glycine + H2O = (6S)-5,6,7,8-tetrahydrofolate + L-serine. It functions in the pathway one-carbon metabolism; tetrahydrofolate interconversion. It participates in amino-acid biosynthesis; glycine biosynthesis; glycine from L-serine: step 1/1. Its function is as follows. Catalyzes the reversible interconversion of serine and glycine with tetrahydrofolate (THF) serving as the one-carbon carrier. This reaction serves as the major source of one-carbon groups required for the biosynthesis of purines, thymidylate, methionine, and other important biomolecules. Also exhibits THF-independent aldolase activity toward beta-hydroxyamino acids, producing glycine and aldehydes, via a retro-aldol mechanism. In Synechococcus sp. (strain ATCC 27144 / PCC 6301 / SAUG 1402/1) (Anacystis nidulans), this protein is Serine hydroxymethyltransferase.